The following is a 235-amino-acid chain: Glycerol-3-phosphate acyltransferase (235 aa).

6 consecutive transmembrane segments (helical) span residues 4–24 (LLAI…LVAG), 56–76 (VVTL…VAFF), 94–114 (LLAG…GFKG), 122–142 (AGML…IFLL), 152–172 (VASM…KYIF), and 191–211 (FHDS…LAIL).

The protein belongs to the PlsY family. As to quaternary structure, probably interacts with PlsX.

The protein resides in the cell inner membrane. The catalysed reaction is an acyl phosphate + sn-glycerol 3-phosphate = a 1-acyl-sn-glycero-3-phosphate + phosphate. It participates in lipid metabolism; phospholipid metabolism. Catalyzes the transfer of an acyl group from acyl-phosphate (acyl-PO(4)) to glycerol-3-phosphate (G3P) to form lysophosphatidic acid (LPA). This enzyme utilizes acyl-phosphate as fatty acyl donor, but not acyl-CoA or acyl-ACP. In Pelodictyon phaeoclathratiforme (strain DSM 5477 / BU-1), this protein is Glycerol-3-phosphate acyltransferase.